The primary structure comprises 100 residues: Aspartyl/glutamyl-tRNA(Asn/Gln) amidotransferase subunit C (100 aa).

It belongs to the GatC family. As to quaternary structure, heterotrimer of A, B and C subunits.

It catalyses the reaction L-glutamyl-tRNA(Gln) + L-glutamine + ATP + H2O = L-glutaminyl-tRNA(Gln) + L-glutamate + ADP + phosphate + H(+). It carries out the reaction L-aspartyl-tRNA(Asn) + L-glutamine + ATP + H2O = L-asparaginyl-tRNA(Asn) + L-glutamate + ADP + phosphate + 2 H(+). Functionally, allows the formation of correctly charged Asn-tRNA(Asn) or Gln-tRNA(Gln) through the transamidation of misacylated Asp-tRNA(Asn) or Glu-tRNA(Gln) in organisms which lack either or both of asparaginyl-tRNA or glutaminyl-tRNA synthetases. The reaction takes place in the presence of glutamine and ATP through an activated phospho-Asp-tRNA(Asn) or phospho-Glu-tRNA(Gln). In Streptococcus gordonii (strain Challis / ATCC 35105 / BCRC 15272 / CH1 / DL1 / V288), this protein is Aspartyl/glutamyl-tRNA(Asn/Gln) amidotransferase subunit C.